Reading from the N-terminus, the 165-residue chain is Protoporphyrinogen IX oxidase (165 aa).

4 helical membrane-spanning segments follow: residues 26–46 (LHVISVLAWMAGLFYLPRLFV), 77–97 (AMIATWIFGLLLVFTPGIVDW), 99–119 (MLWPWTKAACVLAMTGFHMWL), and 145–165 (PTLLMLVIVFSAVAKWNYWGF). His-27 lines the heme pocket. Lys-105 contributes to the heme binding site.

Belongs to the HemJ family. Homodimer. Heme b serves as cofactor.

It localises to the cell membrane. The catalysed reaction is protoporphyrinogen IX + 3 A = protoporphyrin IX + 3 AH2. Its pathway is porphyrin-containing compound metabolism; protoporphyrin-IX biosynthesis; protoporphyrin-IX from protoporphyrinogen-IX: step 1/1. In terms of biological role, catalyzes the oxidation of protoporphyrinogen IX to protoporphyrin IX. Is involved in the biosynthesis of tetrapyrrole molecules like heme and chlorophyll. Does not use oxygen or artificial electron acceptors such as menadione or benzoquinone. The polypeptide is Protoporphyrinogen IX oxidase (Cereibacter sphaeroides (strain ATCC 17023 / DSM 158 / JCM 6121 / CCUG 31486 / LMG 2827 / NBRC 12203 / NCIMB 8253 / ATH 2.4.1.) (Rhodobacter sphaeroides)).